Consider the following 224-residue polypeptide: MSASASTAADFVRFALDEGVLRFGSFKVKSGRISPYFFNAGLFNSGRSVGALAGFYAQALVDSGVAFDMLFGPAYKGIPLATATSVALAGHAAMAGRDVPFAFNRKEAKDHGEGGTLVGAPLTGKVVIIDDVITAGTSVRESVEIIRAAGAEPAAVLIALDRMERAGPDDALSPHSAVQDVARTYGIPVVSIASLADIMTLLQDDAQFAEHRAAVQAYRSKYGV.

Lysine 29 lines the 5-phospho-alpha-D-ribose 1-diphosphate pocket. Residue 37–38 (FF) participates in orotate binding. Residues 75–76 (YK), arginine 105, lysine 106, lysine 109, histidine 111, and 130–138 (DDVITAGTS) contribute to the 5-phospho-alpha-D-ribose 1-diphosphate site. Orotate-binding residues include threonine 134 and arginine 162.

The protein belongs to the purine/pyrimidine phosphoribosyltransferase family. PyrE subfamily. As to quaternary structure, homodimer. Mg(2+) is required as a cofactor.

It carries out the reaction orotidine 5'-phosphate + diphosphate = orotate + 5-phospho-alpha-D-ribose 1-diphosphate. It functions in the pathway pyrimidine metabolism; UMP biosynthesis via de novo pathway; UMP from orotate: step 1/2. Functionally, catalyzes the transfer of a ribosyl phosphate group from 5-phosphoribose 1-diphosphate to orotate, leading to the formation of orotidine monophosphate (OMP). This is Orotate phosphoribosyltransferase from Bordetella parapertussis (strain 12822 / ATCC BAA-587 / NCTC 13253).